The primary structure comprises 284 residues: Undecaprenyl-diphosphatase (284 aa).

The next 8 helical transmembrane spans lie at 7-27, 44-64, 90-110, 116-136, 167-187, 197-217, 229-249, and 259-279; these read IILG…TGHL, EMFD…LYFH, LWLK…PLND, FYHF…FIVI, VLSL…ALLI, FTFF…ILHF, FGVL…AIKF, and FTFF…YAAF.

Belongs to the UppP family.

Its subcellular location is the cell membrane. The catalysed reaction is di-trans,octa-cis-undecaprenyl diphosphate + H2O = di-trans,octa-cis-undecaprenyl phosphate + phosphate + H(+). In terms of biological role, catalyzes the dephosphorylation of undecaprenyl diphosphate (UPP). Confers resistance to bacitracin. The chain is Undecaprenyl-diphosphatase from Lactococcus lactis subsp. cremoris (strain MG1363).